The following is a 173-amino-acid chain: Photosystem I assembly protein Ycf3 (173 aa).

TPR repeat units follow at residues Ala35 to Ala68, Gly72 to Gln105, and Gly120 to Gly153.

It belongs to the Ycf3 family.

It localises to the cellular thylakoid membrane. Functionally, essential for the assembly of the photosystem I (PSI) complex. May act as a chaperone-like factor to guide the assembly of the PSI subunits. The polypeptide is Photosystem I assembly protein Ycf3 (Synechococcus sp. (strain CC9311)).